We begin with the raw amino-acid sequence, 877 residues long: Alanine--tRNA ligase (877 aa).

Zn(2+) contacts are provided by H567, H571, C669, and H673.

It belongs to the class-II aminoacyl-tRNA synthetase family. The cofactor is Zn(2+).

The protein resides in the cytoplasm. The catalysed reaction is tRNA(Ala) + L-alanine + ATP = L-alanyl-tRNA(Ala) + AMP + diphosphate. Catalyzes the attachment of alanine to tRNA(Ala) in a two-step reaction: alanine is first activated by ATP to form Ala-AMP and then transferred to the acceptor end of tRNA(Ala). Also edits incorrectly charged Ser-tRNA(Ala) and Gly-tRNA(Ala) via its editing domain. This is Alanine--tRNA ligase from Lactobacillus delbrueckii subsp. bulgaricus (strain ATCC 11842 / DSM 20081 / BCRC 10696 / JCM 1002 / NBRC 13953 / NCIMB 11778 / NCTC 12712 / WDCM 00102 / Lb 14).